The primary structure comprises 567 residues: Glucose-6-phosphate isomerase, cytosolic B (567 aa).

D-glucose 6-phosphate-binding positions include 156–157 (GS), 212–217 (SKTFTT), Q356, E360, H391, and K516. The Proton donor role is filled by E360. Active-site residues include H391 and K516.

It belongs to the GPI family. Homodimer.

The protein localises to the cytoplasm. It carries out the reaction alpha-D-glucose 6-phosphate = beta-D-fructose 6-phosphate. It functions in the pathway carbohydrate degradation; glycolysis; D-glyceraldehyde 3-phosphate and glycerone phosphate from D-glucose: step 2/4. Its function is as follows. Catalyzes the conversion of glucose-6-phosphate to fructose-6-phosphate, the second step in glycolysis, and the reverse reaction during gluconeogenesis. In Oryza sativa subsp. japonica (Rice), this protein is Glucose-6-phosphate isomerase, cytosolic B.